The primary structure comprises 130 residues: DNA-directed RNA polymerase subunit omega (130 aa).

A disordered region spans residues 107–130 (SLDVSQESHDDEIDDQDSGEEVPI). Over residues 115–130 (HDDEIDDQDSGEEVPI) the composition is skewed to acidic residues.

It belongs to the RNA polymerase subunit omega family. In terms of assembly, the RNAP catalytic core consists of 2 alpha, 1 beta, 1 beta' and 1 omega subunit. When a sigma factor is associated with the core the holoenzyme is formed, which can initiate transcription.

The enzyme catalyses RNA(n) + a ribonucleoside 5'-triphosphate = RNA(n+1) + diphosphate. In terms of biological role, promotes RNA polymerase assembly. Latches the N- and C-terminal regions of the beta' subunit thereby facilitating its interaction with the beta and alpha subunits. This chain is DNA-directed RNA polymerase subunit omega, found in Wolbachia pipientis subsp. Culex pipiens (strain wPip).